The primary structure comprises 157 residues: Probable succinate transporter subunit YjjB (157 aa).

The next 5 helical transmembrane spans lie at 8 to 28 (LALM…AMVF), 34 to 54 (ALPW…LMMS), 55 to 75 (AGFN…SIGI), 87 to 107 (VFTV…TAMI), and 129 to 149 (FLKA…PGLW).

This sequence belongs to the ThrE exporter (TC 2.A.79) family. In terms of assembly, the transporter is composed of YjjB and YjjP.

Its subcellular location is the cell inner membrane. In terms of biological role, involved in succinate export with YjjP. Both proteins are required for export. The polypeptide is Probable succinate transporter subunit YjjB (Salmonella typhi).